The following is a 592-amino-acid chain: Inactive heparanase-2 (592 aa).

The signal sequence occupies residues 1–41; that stretch reads MRVLCAFPEAMPSSNSRPPACLAPGALYLALLLHLSLSSQA. N-linked (GlcNAc...) asparagine glycans are attached at residues asparagine 254 and asparagine 392.

Belongs to the glycosyl hydrolase 79 family. As to quaternary structure, interacts with HPSE. Interacts with SDC1 (via glycan chains). As to expression, widely expressed, with the highest expression in brain, mammary gland, prostate, small intestine, testis and uterus. In the central nervous system, expressed in the spinal cord, caudate nucleus, thalamus, substantia nigra, medulla oblongata, putamen and pons. In the urinary bladder, expressed in longitudinal and circular layers of detrusor muscle. Found both in normal and cancer tissues.

Its subcellular location is the secreted. The protein localises to the extracellular space. It localises to the extracellular matrix. In terms of biological role, binds heparin and heparan sulfate with high affinity, but lacks heparanase activity. Inhibits HPSE, possibly by competing for its substrates (in vitro). In Homo sapiens (Human), this protein is Inactive heparanase-2 (HPSE2).